The sequence spans 65 residues: Hirudin-2B (65 aa).

An interaction with thrombin active site region spans residues 1–3; sequence ITY. 3 disulfides stabilise this stretch: Cys-6/Cys-14, Cys-16/Cys-28, and Cys-22/Cys-39. Residues 39 to 65 are disordered; that stretch reads CVTGEGTPKPQSHNDGDFEEIPEEYLQ. O-linked (GalNAc...) threonine glycosylation is present at Thr-45. Residues 55-65 are interaction with fibrinogen-binding exosite of thrombin; that stretch reads DFEEIPEEYLQ. A compositionally biased stretch (acidic residues) spans 55 to 65; the sequence is DFEEIPEEYLQ. A Sulfotyrosine modification is found at Tyr-63.

Belongs to the protease inhibitor I14 (hirudin) family.

The protein resides in the secreted. In terms of biological role, hirudin is a potent thrombin-specific protease inhibitor. It forms a stable non-covalent complex with alpha-thrombin, thereby abolishing its ability to cleave fibrinogen. The protein is Hirudin-2B of Hirudo medicinalis (Medicinal leech).